The following is a 299-amino-acid chain: Leucine zipper transcription factor-like protein 1 (299 aa).

Positions 96–296 (LKLQTDISEL…DLRKRLAQYE (201 aa)) form a coiled coil. The interval 145-299 (GTAELLNKEI…KRLAQYEPED (155 aa)) is interaction with BSS9.

Belongs to the LZTFL1 family. In terms of assembly, self-associates. Interacts with BBS9; the interaction mediates the association of LZTL1 with the BBsome complex and regulates BBSome ciliary trafficking. Expressed in prostate, ovary, stomach, pancreas, esophagus, breast, liver, bladder, kidney, thyroid, colon and lung (at protein level). Down-regulated in multiple primary tumors (at protein level). Detected in testis, heart, skeletal muscle, thymus, spleen, small intestine, and peripheral blood leukocytes.

Its subcellular location is the cytoplasm. In terms of biological role, regulates ciliary localization of the BBSome complex. Together with the BBSome complex, controls SMO ciliary trafficking and contributes to the sonic hedgehog (SHH) pathway regulation. May play a role in neurite outgrowth. May have tumor suppressor function. The polypeptide is Leucine zipper transcription factor-like protein 1 (LZTFL1) (Homo sapiens (Human)).